Here is a 451-residue protein sequence, read N- to C-terminus: Aminodeoxychorismate synthase component 1 (451 aa).

L-tryptophan contacts are provided by residues S34, 41 to 44, and 238 to 240; these read HNRF and PFS. The active-site Proton donor is E256. K272 acts as the N6-(4-deoxychorismate)-lysine intermediate in catalysis.

This sequence belongs to the anthranilate synthase component I family. In terms of assembly, monomer. Heterodimer consisting of two non-identical subunits: a glutamine amidotransferase subunit (PabA) and a aminodeoxychorismate synthase subunit (PabB). Mg(2+) serves as cofactor.

The catalysed reaction is chorismate + L-glutamine = 4-amino-4-deoxychorismate + L-glutamate. Its pathway is cofactor biosynthesis; tetrahydrofolate biosynthesis; 4-aminobenzoate from chorismate: step 1/2. In terms of biological role, part of a heterodimeric complex that catalyzes the two-step biosynthesis of 4-amino-4-deoxychorismate (ADC), a precursor of p-aminobenzoate (PABA) and tetrahydrofolate. In the first step, a glutamine amidotransferase (PabA) generates ammonia as a substrate that, along with chorismate, is used in the second step, catalyzed by aminodeoxychorismate synthase (PabB) to produce ADC. The polypeptide is Aminodeoxychorismate synthase component 1 (pabB) (Klebsiella aerogenes (Enterobacter aerogenes)).